Here is a 319-residue protein sequence, read N- to C-terminus: Carbonic anhydrase 6 (319 aa).

Residues 1 to 14 form the signal peptide; sequence MITLLFLLVVGAQA. Residues 16–273 form the Alpha-carbonic anhydrase domain; that stretch reads HEWTYSEGVL…LNHRVVEANF (258 aa). C37 and C219 form a disulfide bridge. N62 carries N-linked (GlcNAc...) asparagine glycosylation. H80 acts as the Proton donor/acceptor in catalysis. Residues H106, H108, and H133 each coordinate Zn(2+). 215–216 contacts substrate; that stretch reads TT. N251 carries an N-linked (GlcNAc...) asparagine glycan.

This sequence belongs to the alpha-carbonic anhydrase family. Requires Zn(2+) as cofactor. In terms of tissue distribution, major constituent of saliva.

It is found in the secreted. The enzyme catalyses hydrogencarbonate + H(+) = CO2 + H2O. In terms of biological role, reversible hydration of carbon dioxide. Its role in saliva is unknown. The protein is Carbonic anhydrase 6 (CA6) of Bos taurus (Bovine).